Reading from the N-terminus, the 241-residue chain is Ribosomal RNA small subunit methyltransferase G (241 aa).

S-adenosyl-L-methionine contacts are provided by residues Gly-79, Phe-84, 130 to 131 (AE), and Arg-150.

It belongs to the methyltransferase superfamily. RNA methyltransferase RsmG family.

It is found in the cytoplasm. Its function is as follows. Specifically methylates the N7 position of a guanine in 16S rRNA. This is Ribosomal RNA small subunit methyltransferase G from Limosilactobacillus reuteri (strain DSM 20016) (Lactobacillus reuteri).